An 85-amino-acid polypeptide reads, in one-letter code: Arminin 2b (85 aa).

Positions 1–18 (MKTVFAILFLAFIALTYA) are cleaved as a signal peptide. A propeptide spanning residues 19 to 57 (RSYEDVKEEIKNEIEKEILEDLEEESDELNDKSKEINDA) is cleaved from the precursor. Ala-82 bears the Alanine amide mark.

It belongs to the arminin family. Expressed in entodermal epithelium along the body column.

The protein resides in the secreted. It is found in the target cell membrane. Functionally, antimicrobial peptide with a broad-spectrum antimicrobial activity. Keeps its antibacterial activity under a wide range of salt concentrations that mimic physiological conditions of human blood, which is surprising, since Hydra is an obligate freshwater animal with nearly no salt tolerance. Does not affect red blood cells. The polypeptide is Arminin 2b (Hydra vulgaris (Hydra)).